We begin with the raw amino-acid sequence, 590 residues long: Muscarinic acetylcholine receptor M3 (590 aa).

At 1-67 (MTLHNNNTTS…DPLGGHTIWQ (67 aa)) the chain is on the extracellular side. N-linked (GlcNAc...) asparagine glycosylation is found at N6, N7, N15, N41, N48, and N53. The chain crosses the membrane as a helical span at residues 68–91 (VVFIAFLTGILALVTIIGNILVIV). At 92 to 104 (AFKVNKQLKTVNN) the chain is on the cytoplasmic side. The helical transmembrane segment at 105–130 (YFLLSLACADLIIGVISMNLFTTYII) threads the bilayer. Over 131–142 (MNRWALGNLACD) the chain is Extracellular. C141 and C221 are disulfide-bonded. The chain crosses the membrane as a helical span at residues 143 to 164 (LWLSIDYVASNASVMNLLVISF). At 165-184 (DRYFSITRPLTYRAKRTTKR) the chain is on the cytoplasmic side. The helical transmembrane segment at 185–206 (AGVMIGLAWVISFILWAPAILF) threads the bilayer. At 207 to 229 (WQYFVGKRTVPPGECFIQFLSEP) the chain is on the extracellular side. The chain crosses the membrane as a helical span at residues 230–252 (TITFGTAIAAFYMPVTIMTILYW). Residues 253–491 (RIYKETEKRT…SLIKEKKAAQ (239 aa)) are Cytoplasmic-facing. A Basolateral sorting signal motif is present at residues 275–281 (AEAENFV). The tract at residues 324–357 (AEQMDQDHSSSDSWNNNDAAASLENSASSDEEDI) is disordered. Residues 334–345 (SDSWNNNDAAAS) are compositionally biased toward low complexity. The residue at position 385 (S385) is a Phosphoserine. Residues 492 to 514 (TLSAILLAFIITWTPYNIMVLVN) traverse the membrane as a helical segment. Over 515-526 (TFCDSCIPKTYW) the chain is Extracellular. A disulfide bond links C517 and C520. A helical membrane pass occupies residues 527-546 (NLGYWLCYINSTVNPVCYAL). Over 547-590 (CNKTFRTTFKMLLLCQCDKRKRRKQQYQQRQSVIFHKRVPEQAL) the chain is Cytoplasmic.

Belongs to the G-protein coupled receptor 1 family. Muscarinic acetylcholine receptor subfamily. CHRM3 sub-subfamily. Homodimer; the dimers can form tetramers. Interacts with NALCN. Interacts with TMEM147.

The protein resides in the cell membrane. It localises to the postsynaptic cell membrane. It is found in the basolateral cell membrane. The protein localises to the endoplasmic reticulum membrane. Functionally, the muscarinic acetylcholine receptor mediates various cellular responses, including inhibition of adenylate cyclase, breakdown of phosphoinositides and modulation of potassium channels through the action of G proteins. Primary transducing effect is Pi turnover. The sequence is that of Muscarinic acetylcholine receptor M3 (CHRM3) from Sus scrofa (Pig).